A 34-amino-acid chain; its full sequence is MSDIN-like toxin proprotein 12 (34 aa).

Positions 1–10 (MSDINATRLP) are excised as a propeptide. The segment at residues 11–19 (HPFPLGLQP) is a cross-link (cyclopeptide (His-Pro)). Residues 20–34 (CAGDVDNLTLTKGEG) constitute a propeptide that is removed on maturation.

It belongs to the MSDIN fungal toxin family. Post-translationally, processed by the macrocyclase-peptidase enzyme POPB to yield a toxic cyclic nonapeptide. POPB first removes 10 residues from the N-terminus. Conformational trapping of the remaining peptide forces the enzyme to release this intermediate rather than proceed to macrocyclization. The enzyme rebinds the remaining peptide in a different conformation and catalyzes macrocyclization of the N-terminal 9 residues.

Its function is as follows. Probable toxin that belongs to the MSDIN-like toxin family responsible for a large number of food poisoning cases and deaths. The chain is MSDIN-like toxin proprotein 12 from Amanita bisporigera (Destroying angel).